Here is a 208-residue protein sequence, read N- to C-terminus: MARYRGPVERLERRLGVDLGLKGERRLAGKSALEKRPYAPGQHGQRRTKISEYGLQLQEKQKAKFMYGTSEKQFRALYKEANRKEGNTGSILIQLLEQRLDNVVYRMGFATTRASARQFVNHGHVLVDGKRVDIPSYRVKAGQKIEIREKSKTNSQILRAIELTNQTGMVEWVDVDKEKLFGIFSRVPEREEIAIPVEERLIVELYSK.

Residues 98-161 (QRLDNVVYRM…KTNSQILRAI (64 aa)) enclose the S4 RNA-binding domain.

Belongs to the universal ribosomal protein uS4 family. Part of the 30S ribosomal subunit. Contacts protein S5. The interaction surface between S4 and S5 is involved in control of translational fidelity.

In terms of biological role, one of the primary rRNA binding proteins, it binds directly to 16S rRNA where it nucleates assembly of the body of the 30S subunit. Its function is as follows. With S5 and S12 plays an important role in translational accuracy. The sequence is that of Small ribosomal subunit protein uS4 from Sulfurovum sp. (strain NBC37-1).